We begin with the raw amino-acid sequence, 629 residues long: tRNA uridine 5-carboxymethylaminomethyl modification enzyme MnmG (629 aa).

13–18 (GGGHAG) lines the FAD pocket. Position 273–287 (273–287 (GPRYCPSIEDKIVRF)) interacts with NAD(+).

Belongs to the MnmG family. As to quaternary structure, homodimer. Heterotetramer of two MnmE and two MnmG subunits. FAD is required as a cofactor.

The protein resides in the cytoplasm. NAD-binding protein involved in the addition of a carboxymethylaminomethyl (cmnm) group at the wobble position (U34) of certain tRNAs, forming tRNA-cmnm(5)s(2)U34. In Pseudoalteromonas translucida (strain TAC 125), this protein is tRNA uridine 5-carboxymethylaminomethyl modification enzyme MnmG.